A 34-amino-acid polypeptide reads, in one-letter code: Photosystem II reaction center protein Psb30 (34 aa).

Residues 6–26 (VIGQLTSLAMIVLVGPAVIVV) form a helical membrane-spanning segment.

Belongs to the Psb30/Ycf12 family. PSII is composed of 1 copy each of membrane proteins PsbA, PsbB, PsbC, PsbD, PsbE, PsbF, PsbH, PsbI, PsbJ, PsbK, PsbL, PsbM, PsbT, PsbX, PsbY, PsbZ, Psb30/Ycf12, peripheral proteins of the oxygen-evolving complex and a large number of cofactors. It forms dimeric complexes.

It is found in the plastid. Its subcellular location is the chloroplast thylakoid membrane. A core subunit of photosystem II (PSII), probably helps stabilize the reaction center. This Gracilaria tenuistipitata var. liui (Red alga) protein is Photosystem II reaction center protein Psb30.